The following is a 529-amino-acid chain: MATTSFSLPNHKFGIKLMLFLVLNLLSLQTSVFAHSSNSKFTKISRHPNSDSSSRTKPSTSSNKGFLSSVQLSLDHALFARSLAFNLTLSHRTSQTLMLDPVNDCLELLDDTLDMLYRIVVIKRKDHVNDDVHTWLSAALTNQETCKQSLSEKSSFNKEGIAIDSFARNLTGLLTNSLDMFVSDKQKSSSSSNLTGGRKLLSDHDFPTWVSSSDRKLLEASVEELRPHAVVAADGSGTHMSVAEALASLEKGSGRSVIHLTAGTYKENLNIPSKQKNVMLVGDGKGKTVIVGSRSNRGGWNTYQSATVAAMGDGFIARDITFVNSAGPNSEQAVALRVGSDRSVVYRCSIDGYQDSLYTLSKRQFYRETDITGTVDFIFGNSAVVFQSCNLVSRKGSSDQNYVTAQGRSDPNQNTGISIHNCRITGSTKTYLGRPWKQYSRTVVMQSFIDGSIHPSGWSPWSSNFALKTLYYGEFGNSGPGSSVSGRVSWAGYHPALTLTEAQGFTVSGFIDGNSWLPSTGVVFDSGLL.

Positions 1 to 34 (MATTSFSLPNHKFGIKLMLFLVLNLLSLQTSVFA) are cleaved as a signal peptide. The tract at residues 36–180 (SSNSKFTKIS…TGLLTNSLDM (145 aa)) is pectinesterase inhibitor 35. A disordered region spans residues 42-64 (TKISRHPNSDSSSRTKPSTSSNK). A compositionally biased stretch (low complexity) spans 50-64 (SDSSSRTKPSTSSNK). 3 N-linked (GlcNAc...) asparagine glycosylation sites follow: Asn-86, Asn-169, and Asn-193. Residues 228–514 (HAVVAADGSG…FTVSGFIDGN (287 aa)) form a pectinesterase 35 region. Thr-302 and Gln-332 together coordinate substrate. Asp-355 serves as the catalytic Proton donor; for pectinesterase activity. Asp-376 acts as the Nucleophile; for pectinesterase activity in catalysis. 2 residues coordinate substrate: Arg-434 and Trp-436.

It in the N-terminal section; belongs to the PMEI family. This sequence in the C-terminal section; belongs to the pectinesterase family. In terms of tissue distribution, expressed in siliques.

The protein resides in the secreted. The protein localises to the cell wall. It catalyses the reaction [(1-&gt;4)-alpha-D-galacturonosyl methyl ester](n) + n H2O = [(1-&gt;4)-alpha-D-galacturonosyl](n) + n methanol + n H(+). It functions in the pathway glycan metabolism; pectin degradation; 2-dehydro-3-deoxy-D-gluconate from pectin: step 1/5. Acts in the modification of cell walls via demethylesterification of cell wall pectin. This chain is Probable pectinesterase/pectinesterase inhibitor 35 (PME35), found in Arabidopsis thaliana (Mouse-ear cress).